A 267-amino-acid polypeptide reads, in one-letter code: MRQKTISNKNKQTKNTNNISLRRKLGLMYKKAILVLKIVLMIFVCLFVFTKYFTSIKTYLITNIYQVTTKLGFRLENVIIEGQQNVDELTILKVLNANKSSPIFSLKLDEISNNLKKSKWIKEVYVSRRLPNTVYIKLFEREPIAIWQINNQLFLIDEEGYKISKDIQPFSHLLHVVGEGANIYASKLVLELQKYPALLNKTLVAIRVGDRRWDLNLKGNISIKLPEKEFETALKYIDALNKTNKLFNQNYKALDLRDRNKYYIQKY.

The Cytoplasmic portion of the chain corresponds to 1-32 (MRQKTISNKNKQTKNTNNISLRRKLGLMYKKA). Residues 33–53 (ILVLKIVLMIFVCLFVFTKYF) form a helical membrane-spanning segment. At 54–267 (TSIKTYLITN…DRNKYYIQKY (214 aa)) the chain is on the periplasmic side. Positions 73–141 (FRLENVIIEG…NTVYIKLFER (69 aa)) constitute a POTRA domain.

Belongs to the FtsQ/DivIB family. FtsQ subfamily.

The protein localises to the cell inner membrane. In terms of biological role, essential cell division protein. In Rickettsia prowazekii (strain Madrid E), this protein is Cell division protein FtsQ.